The sequence spans 755 residues: Polyribonucleotide nucleotidyltransferase (755 aa).

Mg(2+) is bound by residues Asp545 and Asp551. Residues 611-670 enclose the KH domain; it reads PRITAITVPVNKIGEVIGPKGKTINSITEETGANISIEEDGTVYVSAASGAAAEAAIEKI. The S1 motif domain maps to 682 to 751; that stretch reads GERFLGTVVK…NRGKISLAPV (70 aa).

This sequence belongs to the polyribonucleotide nucleotidyltransferase family. The cofactor is Mg(2+).

The protein resides in the cytoplasm. The enzyme catalyses RNA(n+1) + phosphate = RNA(n) + a ribonucleoside 5'-diphosphate. In terms of biological role, involved in mRNA degradation. Catalyzes the phosphorolysis of single-stranded polyribonucleotides processively in the 3'- to 5'-direction. The sequence is that of Polyribonucleotide nucleotidyltransferase from Corynebacterium diphtheriae (strain ATCC 700971 / NCTC 13129 / Biotype gravis).